Consider the following 581-residue polypeptide: Adenine deaminase (581 aa).

It belongs to the metallo-dependent hydrolases superfamily. Adenine deaminase family. It depends on Mn(2+) as a cofactor.

It carries out the reaction adenine + H2O + H(+) = hypoxanthine + NH4(+). This chain is Adenine deaminase, found in Brucella suis biovar 1 (strain 1330).